Consider the following 288-residue polypeptide: 4-diphosphocytidyl-2-C-methyl-D-erythritol kinase (288 aa).

Lys-8 is an active-site residue. Position 92–102 (92–102 (PVAAGMAGGST)) interacts with ATP. The active site involves Asp-134.

The protein belongs to the GHMP kinase family. IspE subfamily.

The enzyme catalyses 4-CDP-2-C-methyl-D-erythritol + ATP = 4-CDP-2-C-methyl-D-erythritol 2-phosphate + ADP + H(+). The protein operates within isoprenoid biosynthesis; isopentenyl diphosphate biosynthesis via DXP pathway; isopentenyl diphosphate from 1-deoxy-D-xylulose 5-phosphate: step 3/6. Catalyzes the phosphorylation of the position 2 hydroxy group of 4-diphosphocytidyl-2C-methyl-D-erythritol. The chain is 4-diphosphocytidyl-2-C-methyl-D-erythritol kinase from Clostridium perfringens (strain SM101 / Type A).